The sequence spans 490 residues: GTPase Der (490 aa).

2 consecutive EngA-type G domains span residues 3 to 166 (PVVA…MEDL) and 203 to 376 (IKLA…DSST). GTP-binding positions include 9–16 (GRPNVGKS), 56–60 (DTGGI), 118–121 (NKID), 209–216 (GRPNVGKS), 256–260 (DTAGV), and 321–324 (NKWD). Residues 377–461 (RRVGTSMLTR…PIRIQFKEGE (85 aa)) enclose the KH-like domain.

It belongs to the TRAFAC class TrmE-Era-EngA-EngB-Septin-like GTPase superfamily. EngA (Der) GTPase family. Associates with the 50S ribosomal subunit.

Functionally, GTPase that plays an essential role in the late steps of ribosome biogenesis. This Shigella boydii serotype 18 (strain CDC 3083-94 / BS512) protein is GTPase Der.